The primary structure comprises 1421 residues: ALK tyrosine kinase receptor homolog scd-2 (1421 aa).

An N-terminal signal peptide occupies residues 1-20 (MRKRRLWWFVVLFRVTLVGA). The Extracellular segment spans residues 21 to 903 (ILPNETFDVR…DTCEEIQIWT (883 aa)). N-linked (GlcNAc...) asparagine glycans are attached at residues N24, N44, N70, N83, N119, and N201. Positions 300 to 338 (QCSRGDQFLCSISANTRCLQNAQCDSRIDCDDESDEMDC) constitute an LDL-receptor class A domain. 3 cysteine pairs are disulfide-bonded: C301–C317, C309–C329, and C323–C338. Positions 339–542 (GNINGTMCDF…NLSFSPTCFE (204 aa)) constitute an MAM domain. N-linked (GlcNAc...) asparagine glycans are attached at residues N342, N362, N495, N533, N546, N633, N726, N793, N849, N873, and N893. A helical membrane pass occupies residues 904-924 (LYNITFLIFAALTIIGALFVV). At 925 to 1421 (YHYRNREKQM…SVPLLECQTR (497 aa)) the chain is on the cytoplasmic side. The 286-residue stretch at 976–1261 (IERGRVLGRG…GMPFPIHPAV (286 aa)) folds into the Protein kinase domain. Residues 982-990 (LGRGNFGEV) and K1003 contribute to the ATP site. The active-site Proton acceptor is D1106.

The protein belongs to the protein kinase superfamily. Tyr protein kinase family. Insulin receptor subfamily. In terms of assembly, interacts (via cytoplasmic domain) with fsn-1 (via SPRY domain). Expressed in AIA sensory neurons.

The protein resides in the cell membrane. The enzyme catalyses L-tyrosyl-[protein] + ATP = O-phospho-L-tyrosyl-[protein] + ADP + H(+). Functionally, probable tyrosine-protein kinase receptor which regulates the dauer/non-dauer developmental decision probably by controlling daf-3 transcriptional activity in parallel or together with the TGF-beta pathway. Regulates integration of conflicting sensory cues in AIA interneurons. May act as a receptor for hen-1. In AWA neurons, together with hen-1, plays a role in regulating olfactory adaptation by controlling the forgetting sensory responses to odorants such as diacetyl. This Caenorhabditis elegans protein is ALK tyrosine kinase receptor homolog scd-2.